The following is a 732-amino-acid chain: MMSGVMTAVSNRWDPGVIRALAEARHGDAFAVLGAHRTDTGRVLRTYLPGAERVSAVLDDGQTIALEAGPEPGLFAGDLPAQGGYRLRIGWPGGEQDTADPYAFGPQLSDFDLHLISEGHHLQLADALGANVVEVDGVRGTRFAVWAPNASRVAVVGDFNSWDARRHPMRLRHQSGVWELFVPDVGPGAHYKYQLRGPHGHELPAKADPVARRAELAPGTASIVADPTPYQWSDDGWMATRARRQAHDAPMSVYEMHAGSWLREEGVDLDWDGLADHLIPYVADMGFTHVELMPVTEHPFGGSWGYQPLGLFAPTARFGTPDGFARFVDRCHREGIGVIVDWVPAHFPTDAHGLAHFDGTALYEHADPREGFHRDWNTLIYNHGRREVSGFLIASAMEFLQRYHVDGLRVDAVASMLYRDYSRNAGEWVPNIHGGRENYETIAFLRRLNALVREHTPGAVMIAEESTAFPGVTADVAHGGLGFHYKWNMGWMHDTLHYASLDPIYRRYHHGELTFSMVYAYSERFVLPISHDEVVHGKGSLLGRMPGDDWQRFANLRAYLGFMFTHPGRKLLFMGCEFGQPTEWNHDSGLPWHLLDDPRHRGVQTLVRDVNRLYVQYPALHAHDDDPSGFAWVVGDDAGNSVVAFLRKGKRGDAPVLVVINFTPVVQHGYRIGVPQGGQWREVFNSDAGIYGGANLGNGGIVTAEQQSMHGHAHALPLLLPPLGAIVLTPPG.

The active-site Nucleophile is aspartate 411. Glutamate 464 serves as the catalytic Proton donor.

It belongs to the glycosyl hydrolase 13 family. GlgB subfamily. Monomer.

The enzyme catalyses Transfers a segment of a (1-&gt;4)-alpha-D-glucan chain to a primary hydroxy group in a similar glucan chain.. It participates in glycan biosynthesis; glycogen biosynthesis. Its function is as follows. Catalyzes the formation of the alpha-1,6-glucosidic linkages in glycogen by scission of a 1,4-alpha-linked oligosaccharide from growing alpha-1,4-glucan chains and the subsequent attachment of the oligosaccharide to the alpha-1,6 position. This is 1,4-alpha-glucan branching enzyme GlgB 1 from Xanthomonas oryzae pv. oryzae (strain KACC10331 / KXO85).